Here is a 306-residue protein sequence, read N- to C-terminus: MATH domain and coiled-coil domain-containing protein At3g29580 (306 aa).

Residues Asp6–Phe132 enclose the MATH domain. Positions Phe253–Ala298 form a coiled coil.

In Arabidopsis thaliana (Mouse-ear cress), this protein is MATH domain and coiled-coil domain-containing protein At3g29580.